The primary structure comprises 338 residues: Clavatol oxidase claD (338 aa).

Residues Asp193 to Gly299 form the Fe2OG dioxygenase domain. Residues His222, Asp224, and His280 each coordinate Fe cation. A 2-oxoglutarate-binding site is contributed by Arg290.

The protein belongs to the iron/ascorbate-dependent oxidoreductase family. Fe(2+) is required as a cofactor.

It catalyses the reaction clavatol + 2-oxoglutarate + O2 = hydroxyclavatol + succinate + CO2. It functions in the pathway secondary metabolite biosynthesis. In terms of biological role, 2-oxoglutarate-dependent dioxygenase; part of the cla gene cluster that produces clavatol and ortho-quinone methide. The clavatol biosynthesis cluster cla and the terrestric acid cluster tra are both involved in the production of peniphenones and penilactones. The non-reducing PKS claF is responsible for the formation of clavatol from successive condensations of 3 malonyl-CoA units, presumably with a simple acetyl-CoA starter unit, and 2 methylation steps. The esterase claE probably collaborates with claF by catalyzing the hydrolysis of ACP-bound acyl intermediates to free the ACP from stalled intermediates. The clavatol oxidase claD then converts clavatol to hydroxyclavatol. Spontaneous dehydration of hydroxyclavatol leads to the accumulation of the highly active ortho-quinone methide. On the other hand, the PKS-NRPS hybrid traA is involved in the formation of crustosic acid, with the help of traB and traD. The polyketide synthase module (PKS) of traA is responsible for the synthesis of the polyketide backbone via the condensation of an acetyl-CoA starter unit with 3 malonyl-CoA units. The downstream nonribosomal peptide synthetase (NRPS) module then amidates the carboxyl end of the polyketide with L-malic acid. Because traA lacks a designated enoylreductase (ER) domain, the required activity is provided the enoyl reductase traG. Crustosic acid undergoes decarboxylation and isomerization to the terrestric acid, catalyzed by the 2-oxoglutarate-dependent dioxygenase traH. Both acids are further converted to the 2 gamma-butyrolactones (R)-5-methyltetronic acid and (S)-5-carboxylmethyltetronic acid, with involvement of the cytochrome P450 monooxygenase claJ. Spontaneous addition of the methide to these gamma-butyrolactones leads to peniphenone D and penilactone D, which undergo again stereospecific attacking by methide to give penilactones A and B. The chain is Clavatol oxidase claD from Penicillium crustosum (Blue mold fungus).